The chain runs to 520 residues: 2-isopropylmalate synthase (520 aa).

The 263-residue stretch at 12–274 (VVIFDTTLRD…WCNVESTMLT (263 aa)) folds into the Pyruvate carboxyltransferase domain. Mn(2+) is bound by residues D21, H209, H211, and N245. A regulatory domain region spans residues 398 to 520 (KLTSLTVIAG…RDVPSAAAAS (123 aa)).

It belongs to the alpha-IPM synthase/homocitrate synthase family. LeuA type 1 subfamily. Homodimer. Requires Mn(2+) as cofactor.

The protein resides in the cytoplasm. It catalyses the reaction 3-methyl-2-oxobutanoate + acetyl-CoA + H2O = (2S)-2-isopropylmalate + CoA + H(+). Its pathway is amino-acid biosynthesis; L-leucine biosynthesis; L-leucine from 3-methyl-2-oxobutanoate: step 1/4. Catalyzes the condensation of the acetyl group of acetyl-CoA with 3-methyl-2-oxobutanoate (2-ketoisovalerate) to form 3-carboxy-3-hydroxy-4-methylpentanoate (2-isopropylmalate). This is 2-isopropylmalate synthase from Nitrobacter hamburgensis (strain DSM 10229 / NCIMB 13809 / X14).